Reading from the N-terminus, the 444-residue chain is Trigger factor (444 aa).

Residues 163 to 248 (GDFLTVDFVG…AKALKKAVAP (86 aa)) enclose the PPIase FKBP-type domain.

The protein belongs to the FKBP-type PPIase family. Tig subfamily.

Its subcellular location is the cytoplasm. The enzyme catalyses [protein]-peptidylproline (omega=180) = [protein]-peptidylproline (omega=0). Functionally, involved in protein export. Acts as a chaperone by maintaining the newly synthesized protein in an open conformation. Functions as a peptidyl-prolyl cis-trans isomerase. This Granulibacter bethesdensis (strain ATCC BAA-1260 / CGDNIH1) protein is Trigger factor.